Reading from the N-terminus, the 152-residue chain is Phospholipase A2 GL16-1 (152 aa).

An N-terminal signal peptide occupies residues 1–21 (MNPAHLLVLLAVCVSLLGAST). The propeptide occupies 22 to 27 (IPPLPL). Cystine bridges form between Cys-38-Cys-104, Cys-54-Cys-151, Cys-56-Cys-72, Cys-71-Cys-132, Cys-78-Cys-125, Cys-88-Cys-118, and Cys-111-Cys-123. Ca(2+) contacts are provided by Tyr-55, Gly-57, and Gly-59. The active site involves His-75. Asp-76 is a binding site for Ca(2+). The active site involves Asp-126.

This sequence belongs to the phospholipase A2 family. Group I subfamily. Ca(2+) is required as a cofactor.

Its subcellular location is the secreted. The catalysed reaction is a 1,2-diacyl-sn-glycero-3-phosphocholine + H2O = a 1-acyl-sn-glycero-3-phosphocholine + a fatty acid + H(+). PA2 catalyzes the calcium-dependent hydrolysis of the 2-acyl groups in 3-sn-phosphoglycerides. This Laticauda semifasciata (Black-banded sea krait) protein is Phospholipase A2 GL16-1.